The following is a 342-amino-acid chain: Inositol 2-dehydrogenase 2 (342 aa).

The protein belongs to the Gfo/Idh/MocA family. Homotetramer.

The catalysed reaction is myo-inositol + NAD(+) = scyllo-inosose + NADH + H(+). Involved in the oxidation of myo-inositol (MI) to 2-keto-myo-inositol (2KMI or 2-inosose). The chain is Inositol 2-dehydrogenase 2 from Mycolicibacterium vanbaalenii (strain DSM 7251 / JCM 13017 / BCRC 16820 / KCTC 9966 / NRRL B-24157 / PYR-1) (Mycobacterium vanbaalenii).